Here is a 266-residue protein sequence, read N- to C-terminus: uncharacterized protein (266 aa).

Transmembrane regions (helical) follow at residues 25–45 (LPSL…GYLL), 64–84 (IGAA…AELI), 111–131 (IVTI…GHLV), 158–178 (VLIS…LSFG), 186–206 (ILGI…HVVA), 209–229 (FVIP…IGNI), and 230–250 (IPAF…IYFI).

Belongs to the FNT transporter (TC 1.A.16) family.

Its subcellular location is the cell membrane. This is an uncharacterized protein from Bacillus subtilis (strain 168).